The chain runs to 147 residues: D-aminoacyl-tRNA deacylase (147 aa).

Positions 136–137 (GP) match the Gly-cisPro motif, important for rejection of L-amino acids motif.

It belongs to the DTD family. Homodimer.

Its subcellular location is the cytoplasm. The enzyme catalyses glycyl-tRNA(Ala) + H2O = tRNA(Ala) + glycine + H(+). It carries out the reaction a D-aminoacyl-tRNA + H2O = a tRNA + a D-alpha-amino acid + H(+). Functionally, an aminoacyl-tRNA editing enzyme that deacylates mischarged D-aminoacyl-tRNAs. Also deacylates mischarged glycyl-tRNA(Ala), protecting cells against glycine mischarging by AlaRS. Acts via tRNA-based rather than protein-based catalysis; rejects L-amino acids rather than detecting D-amino acids in the active site. By recycling D-aminoacyl-tRNA to D-amino acids and free tRNA molecules, this enzyme counteracts the toxicity associated with the formation of D-aminoacyl-tRNA entities in vivo and helps enforce protein L-homochirality. The sequence is that of D-aminoacyl-tRNA deacylase from Streptococcus pneumoniae serotype 4 (strain ATCC BAA-334 / TIGR4).